Reading from the N-terminus, the 86-residue chain is Putative membrane protein insertion efficiency factor (86 aa).

Belongs to the UPF0161 family.

It localises to the cell inner membrane. In terms of biological role, could be involved in insertion of integral membrane proteins into the membrane. The polypeptide is Putative membrane protein insertion efficiency factor (Oleidesulfovibrio alaskensis (strain ATCC BAA-1058 / DSM 17464 / G20) (Desulfovibrio alaskensis)).